The chain runs to 439 residues: Probable tRNA pseudouridine synthase D (439 aa).

The Nucleophile role is filled by Asp-87. A TRUD domain is found at 166-391 (GVPNFFGIQR…SKGLRREILL (226 aa)).

Belongs to the pseudouridine synthase TruD family.

The catalysed reaction is uridine(13) in tRNA = pseudouridine(13) in tRNA. Could be responsible for synthesis of pseudouridine from uracil-13 in transfer RNAs. The chain is Probable tRNA pseudouridine synthase D from Methanococcoides burtonii (strain DSM 6242 / NBRC 107633 / OCM 468 / ACE-M).